A 1083-amino-acid chain; its full sequence is UPF0182 protein BAD_0641 (1083 aa).

The interval 1 to 72 is disordered; the sequence is MSFFDMFGPM…TSKPNRPRKP (72 aa). 7 helical membrane passes run 78-98, 125-145, 178-198, 239-259, 281-301, 325-345, and 372-392; these read IFIGVVLALAIVIGLFFALAQ, LWLAYAVLIAAVGFISATLAI, IAVVISLIVGLVFGSQFNANW, SLLLLAGIIFSIVTHVLMGGI, IGIWLMLNMFAWAANQVLGVF, VTFIMAAITAILGVILGLWIM, and VAIASAIVVSLVLTVAWPVLL. The segment at 976 to 1061 is disordered; it reads DSGASAGDAE…SDAAMKKGDW (86 aa). Basic and acidic residues-rich tracts occupy residues 991 to 1013 and 1050 to 1060; these read TDDKQDAKNDDSADGKTNTDGKQ and KDSDAAMKKGD.

Belongs to the UPF0182 family.

The protein localises to the cell membrane. The chain is UPF0182 protein BAD_0641 from Bifidobacterium adolescentis (strain ATCC 15703 / DSM 20083 / NCTC 11814 / E194a).